We begin with the raw amino-acid sequence, 456 residues long: RuvB-like 1 (456 aa).

Residue K2 forms a Glycyl lysine isopeptide (Lys-Gly) (interchain with G-Cter in SUMO2) linkage. Residue 70 to 77 (GPPGTGKT) participates in ATP binding. Residue K225 forms a Glycyl lysine isopeptide (Lys-Gly) (interchain with G-Cter in SUMO1); alternate linkage. K225 is covalently cross-linked (Glycyl lysine isopeptide (Lys-Gly) (interchain with G-Cter in SUMO2); alternate). K445 is covalently cross-linked (Glycyl lysine isopeptide (Lys-Gly) (interchain with G-Cter in SUMO2)). Position 453 is an N6-acetyllysine (K453).

Belongs to the RuvB family. In terms of assembly, forms homohexameric rings. Can form a dodecamer with RUVBL2 made of two stacked hexameric rings; however, even though RUVBL1 and RUVBL2 are present in equimolar ratio, the oligomeric status of each hexamer is not known. Oligomerization may regulate binding to nucleic acids and conversely, binding to nucleic acids may affect the dodecameric assembly. Interaction of the complex with DHX34 results in conformational changes of the N-terminus of the RUVBL2 subunits, resulting in loss of nucleotide binding ability and ATP hydrolysis of the complex. Interacts with the transcriptional activation domain of MYC. Component of the RNA polymerase II holoenzyme complex. May also act to bridge the LEF1/TCF1-CTNNB1 complex and TBP. Component of the NuA4 histone acetyltransferase complex which contains the catalytic subunit KAT5/TIP60 and the subunits EP400, TRRAP/PAF400, BRD8/SMAP, EPC1, DMAP1/DNMAP1, RUVBL1/TIP49, RUVBL2, ING3, actin, ACTL6A/BAF53A, MORF4L1/MRG15, MORF4L2/MRGX, MRGBP, YEATS4/GAS41, VPS72/YL1 and MEAF6. The NuA4 complex interacts with MYC and the adenovirus E1A protein. RUVBL1 interacts with EP400. Component of a NuA4-related complex which contains EP400, TRRAP/PAF400, SRCAP, BRD8/SMAP, EPC1, DMAP1/DNMAP1, RUVBL1/TIP49, RUVBL2, actin, ACTL6A/BAF53A, VPS72 and YEATS4/GAS41. Component of the BAF53 complex, at least composed of ACTL6A/BAF53A, RUVBL1/TIP49, SMARCA2/BRM, and TRRAP/PAF400. Component of some MLL1/MLL complex, at least composed of the core components KMT2A/MLL1, ASH2L, HCFC1/HCF1, WDR5 and RBBP5, as well as the facultative components BACC1, CHD8, E2F6, HSP70, INO80C, KANSL1, LAS1L, MAX, MCRS1, MGA, MYST1/MOF, PELP1, PHF20, PRP31, RING2, RUVB1/TIP49A, RUVB2/TIP49B, SENP3, TAF1, TAF4, TAF6, TAF7, TAF9 and TEX10. Associates with alpha and gamma tubulins, particularly during metaphase and early anaphase. Interacts with NPAT. Component of the chromatin-remodeling INO80 complex; specifically part of a complex module associated with the helicase ATP-binding and the helicase C-terminal domain of INO80. Interacts with IGHMBP2. Interacts with OFD1. Interacts with HINT1. Component of a complex with USP49 and PSMC5. Component of a SWR1-like complex. Component of the R2TP complex composed at least of RUVBL1, RUVBL2, RPAP3 and PIHD1. Component of the PAQosome complex which is responsible for the biogenesis of several protein complexes and which consists of R2TP complex members RUVBL1, RUVBL2, RPAP3 and PIH1D1, URI complex members PFDN2, PFDN6, PDRG1, UXT and URI1 as well as ASDURF, POLR2E and DNAAF10/WDR92. Interacts with PIH1D1. Interacts with ITFG1. Interacts with WAC; WAC positively regulates MTOR activity by promoting the assembly of the TTT complex composed of TELO2, TTI1 and TTI2 and the RUVBL complex composed of RUVBL1 and RUVBL2 into the TTT-RUVBL complex which leads to the dimerization of the mTORC1 complex and its subsequent activation. The RUVBL1/RUVBL2 complex interacts with ZNHIT1 (via HIT-type zinc finger), ZNHIT3 (via HIT-type zinc finger), ZNHIT6 (via HIT-type zinc finger) and DDX59/ZNHIT5 (via HIT-type zinc finger) in the presence of ADP. Interacts with NOPCHAP1; the interaction is direct and disrupted upon ATP binding. Interacts with SMG1. Interacts with NOP2, NOP56 and NUFIP1. As to quaternary structure, (Microbial infection) Interacts with Mumps L polymerase; this interaction regulates the viral transcription. In terms of tissue distribution, ubiquitously expressed with high expression in heart, skeletal muscle and testis.

It is found in the nucleus matrix. The protein localises to the nucleus. It localises to the nucleoplasm. Its subcellular location is the cytoplasm. The protein resides in the membrane. It is found in the cytoskeleton. The protein localises to the microtubule organizing center. It localises to the centrosome. Its subcellular location is the dynein axonemal particle. It carries out the reaction ATP + H2O = ADP + phosphate + H(+). Its function is as follows. Possesses single-stranded DNA-stimulated ATPase and ATP-dependent DNA helicase (3' to 5') activity; hexamerization is thought to be critical for ATP hydrolysis and adjacent subunits in the ring-like structure contribute to the ATPase activity. Component of the NuA4 histone acetyltransferase complex which is involved in transcriptional activation of select genes principally by acetylation of nucleosomal histones H4 and H2A. This modification may both alter nucleosome-DNA interactions and promote interaction of the modified histones with other proteins which positively regulate transcription. This complex may be required for the activation of transcriptional programs associated with oncogene and proto-oncogene mediated growth induction, tumor suppressor mediated growth arrest and replicative senescence, apoptosis, and DNA repair. The NuA4 complex ATPase and helicase activities seem to be, at least in part, contributed by the association of RUVBL1 and RUVBL2 with EP400. NuA4 may also play a direct role in DNA repair when recruited to sites of DNA damage. Component of a SWR1-like complex that specifically mediates the removal of histone H2A.Z/H2AZ1 from the nucleosome. Proposed core component of the chromatin remodeling INO80 complex which exhibits DNA- and nucleosome-activated ATPase activity and catalyzes ATP-dependent nucleosome sliding. Plays an essential role in oncogenic transformation by MYC and also modulates transcriptional activation by the LEF1/TCF1-CTNNB1 complex. Essential for cell proliferation. May be able to bind plasminogen at cell surface and enhance plasminogen activation. The polypeptide is RuvB-like 1 (Homo sapiens (Human)).